We begin with the raw amino-acid sequence, 533 residues long: WD repeat-containing protein JIP5 (533 aa).

WD repeat units follow at residues 26 to 67, 84 to 130, 176 to 215, 264 to 309, and 372 to 409; these read NYSD…EKQS, GKVS…GSCR, NSNDSITKLCHSATNSCLLAGTENGHVLVYDSKNLGGSKL, NQDD…FMDQ, and GAADEVGLLEIDYDYRLISAGMESLKIWSNEQNEEIAL. 2 stretches are compositionally biased toward acidic residues: residues 408 to 428 and 437 to 452; these read ALDESDDSDDESDSDNSEDDL and ASDEEIEENKEEEDEK. The tract at residues 408-533 is disordered; the sequence is ALDESDDSDD…EHGIRRFDDL (126 aa). Basic and acidic residues-rich tracts occupy residues 453-463 and 521-533; these read EDKPVKIDHPL and QKHEHGIRRFDDL.

It belongs to the WD repeat WDR55 family.

It localises to the nucleus. The protein localises to the nucleolus. The chain is WD repeat-containing protein JIP5 (JIP5) from Scheffersomyces stipitis (strain ATCC 58785 / CBS 6054 / NBRC 10063 / NRRL Y-11545) (Yeast).